A 156-amino-acid chain; its full sequence is Small ribosomal subunit protein uS7 (156 aa).

Belongs to the universal ribosomal protein uS7 family. In terms of assembly, part of the 30S ribosomal subunit. Contacts proteins S9 and S11.

Functionally, one of the primary rRNA binding proteins, it binds directly to 16S rRNA where it nucleates assembly of the head domain of the 30S subunit. Is located at the subunit interface close to the decoding center, probably blocks exit of the E-site tRNA. This is Small ribosomal subunit protein uS7 from Actinobacillus pleuropneumoniae serotype 5b (strain L20).